Reading from the N-terminus, the 311-residue chain is Malate dehydrogenase (311 aa).

Residues 7-13 (GAAGGIG) and D34 each bind NAD(+). 2 residues coordinate substrate: R81 and R87. Residues N94 and 117–119 (ITN) contribute to the NAD(+) site. Substrate is bound by residues N119 and R153. Residue H177 is the Proton acceptor of the active site. Residue M227 coordinates NAD(+).

It belongs to the LDH/MDH superfamily. MDH type 1 family. As to quaternary structure, homodimer.

The enzyme catalyses (S)-malate + NAD(+) = oxaloacetate + NADH + H(+). Functionally, catalyzes the reversible oxidation of malate to oxaloacetate. The protein is Malate dehydrogenase of Shewanella frigidimarina (strain NCIMB 400).